A 304-amino-acid polypeptide reads, in one-letter code: Ribosomal RNA small subunit methyltransferase H (304 aa).

S-adenosyl-L-methionine-binding positions include 47–49 (GGH), Asp66, Phe93, Asp108, and Gln115.

It belongs to the methyltransferase superfamily. RsmH family.

The protein localises to the cytoplasm. The enzyme catalyses cytidine(1402) in 16S rRNA + S-adenosyl-L-methionine = N(4)-methylcytidine(1402) in 16S rRNA + S-adenosyl-L-homocysteine + H(+). Its function is as follows. Specifically methylates the N4 position of cytidine in position 1402 (C1402) of 16S rRNA. The sequence is that of Ribosomal RNA small subunit methyltransferase H from Prochlorococcus marinus (strain NATL2A).